The sequence spans 1251 residues: Immunoglobulin-like and fibronectin type III domain-containing protein 1 (1251 aa).

One can recognise an Ig-like 1 domain in the interval 29-119; it reads PDFEQKPVTS…GEAACSVRLT (91 aa). The interval 61–81 is disordered; the sequence is RWQNSKGDLSDSSKYKISSSP. Positions 188–221 form a coiled coil; it reads IVDYRGMLRRLQEMKKEQEDKMAQYINTISSLRH. The Ig-like 2 domain occupies 309–398; the sequence is PRVVVPLAET…SSAWLVVEAG (90 aa). Residues 403-433 are compositionally biased toward basic and acidic residues; the sequence is LQSTSADHKLQSRRSGKDGRLDIYGERRDAT. Positions 403 to 454 are disordered; it reads LQSTSADHKLQSRRSGKDGRLDIYGERRDATRSSTSRYKPGTGSFSKDAQGP. Polar residues predominate over residues 434–449; sequence RSSTSRYKPGTGSFSK. An Ig-like 3 domain is found at 454-539; that stretch reads PMGHFSQGLA…GDQQSEATLT (86 aa). 3 Fibronectin type-III domains span residues 646–741, 746–845, and 847–942; these read PPQG…VAPE, APSA…MRPP, and LVRN…AMPV. The 85-residue stretch at 946–1030 folds into the Ig-like 4 domain; sequence PKFLVDSSTK…LRTLQGKEVA (85 aa). In terms of domain architecture, Fibronectin type-III 4 spans 1043–1137; it reads APGPIHLQEN…TSQPWCIPRQ (95 aa). Positions 1151-1245 constitute an Ig-like 5 domain; that stretch reads PDLSQKPRFL…GQAVSTATLI (95 aa).

In terms of assembly, interacts with FLNC. Interacts with KY. In terms of tissue distribution, expressed in skeletal muscle.

Its subcellular location is the nucleus. It is found in the cytoplasm. The protein localises to the myofibril. It localises to the sarcomere. The protein resides in the z line. This Homo sapiens (Human) protein is Immunoglobulin-like and fibronectin type III domain-containing protein 1 (IGFN1).